The following is a 252-amino-acid chain: Phosphoglycolate phosphatase (252 aa).

Catalysis depends on Asp-13, which acts as the Nucleophile. The Mg(2+) site is built by Asp-13, Asp-15, and Asp-192.

Belongs to the HAD-like hydrolase superfamily. CbbY/CbbZ/Gph/YieH family. In terms of assembly, monomer. It depends on Mg(2+) as a cofactor. Requires chloride as cofactor.

The enzyme catalyses 2-phosphoglycolate + H2O = glycolate + phosphate. Its pathway is organic acid metabolism; glycolate biosynthesis; glycolate from 2-phosphoglycolate: step 1/1. Its function is as follows. Specifically catalyzes the dephosphorylation of 2-phosphoglycolate. Is involved in the dissimilation of the intracellular 2-phosphoglycolate formed during the DNA repair of 3'-phosphoglycolate ends, a major class of DNA lesions induced by oxidative stress. This Shigella boydii serotype 4 (strain Sb227) protein is Phosphoglycolate phosphatase.